Consider the following 211-residue polypeptide: 3-demethoxyubiquinol 3-hydroxylase (211 aa).

Positions 60, 90, 93, 142, 174, and 177 each coordinate Fe cation.

This sequence belongs to the COQ7 family. It depends on Fe cation as a cofactor.

Its subcellular location is the cell membrane. It catalyses the reaction a 5-methoxy-2-methyl-3-(all-trans-polyprenyl)benzene-1,4-diol + AH2 + O2 = a 3-demethylubiquinol + A + H2O. The protein operates within cofactor biosynthesis; ubiquinone biosynthesis. Functionally, catalyzes the hydroxylation of 2-nonaprenyl-3-methyl-6-methoxy-1,4-benzoquinol during ubiquinone biosynthesis. This Francisella tularensis subsp. tularensis (strain FSC 198) protein is 3-demethoxyubiquinol 3-hydroxylase.